The sequence spans 72 residues: U1-sicaritoxin-Sdo1a (72 aa).

The first 24 residues, 1–24 (MMKKFTCFLLCATILCAIFCVSVA), serve as a signal peptide directing secretion. The propeptide occupies 25-41 (EKFHKMKSDIERDETPM). 3 cysteine pairs are disulfide-bonded: C43–C61, C50–C64, and C60–C69.

Expressed by the venom gland.

The protein localises to the secreted. The chain is U1-sicaritoxin-Sdo1a from Hexophthalma dolichocephala (Afrotropical spider).